A 108-amino-acid polypeptide reads, in one-letter code: Nucleoid-associated protein Bmul_1447/BMULJ_01796 (108 aa).

The segment at 84-108 (EATSQEKMSGMTSGLPLPPGFKLPF) is disordered. Residues 85-95 (ATSQEKMSGMT) are compositionally biased toward polar residues. Over residues 99–108 (PLPPGFKLPF) the composition is skewed to pro residues.

Belongs to the YbaB/EbfC family. In terms of assembly, homodimer.

The protein resides in the cytoplasm. The protein localises to the nucleoid. In terms of biological role, binds to DNA and alters its conformation. May be involved in regulation of gene expression, nucleoid organization and DNA protection. The protein is Nucleoid-associated protein Bmul_1447/BMULJ_01796 of Burkholderia multivorans (strain ATCC 17616 / 249).